Reading from the N-terminus, the 284-residue chain is Interferon antagonist OPG040 (284 aa).

6 ANK repeats span residues 29-58, 60-89, 93-122, 127-157, 159-188, and 193-222; these read HGHSALYYAIADNNVRLVCTLLNAGALKNL, ENEFPLHQAATLEDTKIVKILLFSGLDDSQ, KGNTALYYAVDSGNMQTVKLFVKKNWRLMF, GWKTSFYHAVMLNDVSIVSYFLSEIPSTFDL, ILLSCIHITIKNGHVDMMILLLDYMTSTNT, and LFIPDIKLAIDNKDIEMLQALFKYDINIYS.

It belongs to the orthopoxvirus OPG039 family.

Its subcellular location is the host cytoplasm. The protein resides in the host nucleus. Its function is as follows. Inhibits antiviral activity induced by type I interferons. Does not block signal transduction of IFN, but is important to counter the host antiviral state induced by a pre-treatment with IFN. Plays a role in the inhibition of host NF-kappa-B activation by preventing the acetylation of the RELA/p65 subunit of NF-kappaB. This is Interferon antagonist OPG040 (OPG039) from Bos taurus (Bovine).